The primary structure comprises 296 residues: Probable endonuclease 4 (296 aa).

Histidine 68, histidine 109, glutamate 144, aspartate 178, histidine 181, histidine 213, aspartate 226, histidine 228, and glutamate 258 together coordinate Zn(2+).

It belongs to the AP endonuclease 2 family. It depends on Zn(2+) as a cofactor.

It carries out the reaction Endonucleolytic cleavage to 5'-phosphooligonucleotide end-products.. Its function is as follows. Endonuclease IV plays a role in DNA repair. It cleaves phosphodiester bonds at apurinic or apyrimidinic (AP) sites, generating a 3'-hydroxyl group and a 5'-terminal sugar phosphate. This Staphylococcus carnosus (strain TM300) protein is Probable endonuclease 4.